A 425-amino-acid polypeptide reads, in one-letter code: ATP-dependent RNA helicase eIF4A (425 aa).

The short motif at 38 to 66 (DTWEDYGLKEDLLKGIYSIGFETPSFIQK) is the Q motif element. The Helicase ATP-binding domain occupies 69-241 (IQPIIDGRDI…EEILINPVII (173 aa)). 82-89 (AQSGTGKT) lines the ATP pocket. A DEAD box motif is present at residues 187–190 (DEAD). Positions 252–425 (GIRQYFIDLR…KELPADFSFQ (174 aa)) constitute a Helicase C-terminal domain.

The protein belongs to the DEAD box helicase family. eIF4A subfamily. As to quaternary structure, component of the eIF4F complex, which composition varies with external and internal environmental conditions. It is composed of at least eIF4A, eIF4E and eIF4G.

It is found in the cytoplasm. The enzyme catalyses ATP + H2O = ADP + phosphate + H(+). Functionally, ATP-dependent RNA helicase which is a subunit of the eIF4F complex involved in cap recognition and is required for mRNA binding to ribosome. In the current model of translation initiation, eIF4A unwinds RNA secondary structures in the 5'-UTR of mRNAs which is necessary to allow efficient binding of the small ribosomal subunit, and subsequent scanning for the initiator codon. In Encephalitozoon cuniculi (strain GB-M1) (Microsporidian parasite), this protein is ATP-dependent RNA helicase eIF4A (TIF1).